Here is a 421-residue protein sequence, read N- to C-terminus: Ankyrin repeat and SOCS box protein 6 (421 aa).

ANK repeat units lie at residues 67–97, 102–131, 136–166, 170–205, 226–255, and 260–289; these read EGVSNALLKMAELGLTRAADVLLRHGANLNF, TYYTALHIAVLRNQPDMVELLVHHGADINR, HESSPLDLASEEPERLPCLQRLLDLGADVNA, HGKTALLHALASSDGVQIHNTENIRLLLEGGADVKA, GGDKEEAQMINRFCFQVTRLLLAHGADPSE, and ESLTHICLKSFKLHFPLLRFLLESGAAYNC. Positions 360–415 constitute an SOCS box domain; the sequence is ALHFSLRQLESYPPPLKHLCRVAIRLYLQPWPVDVKVKALPLPDRLKWYLLSEHSG.

This sequence belongs to the ankyrin SOCS box (ASB) family. In terms of assembly, binds APS. Identified in a complex with ELOB and ELOC. Interacts with CUL5 and RNF7. Interacts with SQSTM1.

It localises to the cytoplasm. It functions in the pathway protein modification; protein ubiquitination. Probable substrate-recognition component of a SCF-like ECS (Elongin-Cullin-SOCS-box protein) E3 ubiquitin-protein ligase complex which mediates the ubiquitination and subsequent proteasomal degradation of target proteins. May play a role in the regulation of cell proliferation and autophagy by promoting the ubiquitination and degradation of SQSTM1. The protein is Ankyrin repeat and SOCS box protein 6 (ASB6) of Pongo abelii (Sumatran orangutan).